A 326-amino-acid chain; its full sequence is Glycerol-3-phosphate dehydrogenase [NAD(P)+] (326 aa).

Positions 16, 36, 37, and 106 each coordinate NADPH. 2 residues coordinate sn-glycerol 3-phosphate: lysine 106 and glycine 132. Alanine 136 is a binding site for NADPH. Residues lysine 187, aspartate 240, serine 250, arginine 251, and asparagine 252 each coordinate sn-glycerol 3-phosphate. The Proton acceptor role is filled by lysine 187. Arginine 251 serves as a coordination point for NADPH. NADPH-binding residues include valine 271 and glutamate 273.

Belongs to the NAD-dependent glycerol-3-phosphate dehydrogenase family.

The protein resides in the cytoplasm. It catalyses the reaction sn-glycerol 3-phosphate + NAD(+) = dihydroxyacetone phosphate + NADH + H(+). The catalysed reaction is sn-glycerol 3-phosphate + NADP(+) = dihydroxyacetone phosphate + NADPH + H(+). Its pathway is membrane lipid metabolism; glycerophospholipid metabolism. Catalyzes the reduction of the glycolytic intermediate dihydroxyacetone phosphate (DHAP) to sn-glycerol 3-phosphate (G3P), the key precursor for phospholipid synthesis. This is Glycerol-3-phosphate dehydrogenase [NAD(P)+] from Deinococcus geothermalis (strain DSM 11300 / CIP 105573 / AG-3a).